Consider the following 78-residue polypeptide: Acyl carrier protein (78 aa).

In terms of domain architecture, Carrier spans 2–77 (SDIAERVKKI…DAVKFIEKAQ (76 aa)). Ser-37 is subject to O-(pantetheine 4'-phosphoryl)serine.

This sequence belongs to the acyl carrier protein (ACP) family. In terms of processing, 4'-phosphopantetheine is transferred from CoA to a specific serine of apo-ACP by AcpS. This modification is essential for activity because fatty acids are bound in thioester linkage to the sulfhydryl of the prosthetic group.

It localises to the cytoplasm. Its pathway is lipid metabolism; fatty acid biosynthesis. Functionally, carrier of the growing fatty acid chain in fatty acid biosynthesis. In Rhizobium etli (strain CIAT 652), this protein is Acyl carrier protein.